The following is a 30-amino-acid chain: Ranatuerin-2OK (30 aa).

An intrachain disulfide couples cysteine 23 to cysteine 30.

In terms of tissue distribution, expressed by the skin glands.

It localises to the secreted. Antimicrobial peptide. Active against Gram-negative bacterium E.coli (MIC=12.5 uM) and against Gram-positive bacterium S.aureus (MIC=50 uM). The protein is Ranatuerin-2OK of Nidirana okinavana (Kampira Falls frog).